The following is a 302-amino-acid chain: Pathogenicity locus probable regulatory protein HrpS (302 aa).

In terms of domain architecture, Sigma-54 factor interaction spans 9 to 237; sequence DDLDAERVPN…LKAAAKRHVL (229 aa). ATP-binding positions include 37-44 and 99-108; these read GETGTGKD and AQGGTLYLDE. A DNA-binding region (H-T-H motif) is located at residues 279–298; sequence IDAASLELDIPRRTLYRRIK.

Regulates the activation of the sigma factor HrpL which itself induces the expression of hprD as well as other hrp loci which are involved in plant pathogenicity, hrmA and avr genes. Probably interacts with sigma-54. In Pseudomonas syringae pv. syringae, this protein is Pathogenicity locus probable regulatory protein HrpS (hrpS).